A 71-amino-acid chain; its full sequence is MTDVESVISSFASSARAGRRNALPDIQSSLATGGSPDLALKLEALAVKEDAKMKNEEKDQGQPKKPLDEDK.

The segment at 1–21 is disordered; the sequence is MTDVESVISSFASSARAGRRN. Position 2 is a blocked amino end (Thr) (Thr2). Ser35 is subject to Phosphoserine. Residues 51–71 form a disordered region; the sequence is AKMKNEEKDQGQPKKPLDEDK.

Belongs to the PKI family. Testis.

Functionally, extremely potent competitive inhibitor of cAMP-dependent protein kinase activity, this protein interacts with the catalytic subunit of the enzyme after the cAMP-induced dissociation of its regulatory chains. In Rattus norvegicus (Rat), this protein is cAMP-dependent protein kinase inhibitor beta (Pkib).